A 152-amino-acid polypeptide reads, in one-letter code: MINMDKTLSVIVFLISLIIIFGIYFSSSNFSFKKVEINKSTINDFGDENILTFVPEVCDRFYYEKDGFDWERNINNIETVIIGSDAVVIEKGDFNETEILKELIENGYSVESCRGVYYYKNEKALSDRYIIVGNNLIIKANDISGIRWRYLQ.

A helical membrane pass occupies residues 7 to 27 (TLSVIVFLISLIIIFGIYFSS).

It is found in the membrane. This is an uncharacterized protein from Methanocaldococcus jannaschii (strain ATCC 43067 / DSM 2661 / JAL-1 / JCM 10045 / NBRC 100440) (Methanococcus jannaschii).